The sequence spans 595 residues: Myb-like protein D (595 aa).

4 disordered regions span residues 1–47 (MQQQ…NGLV), 55–74 (QQYQ…DEGE), 82–266 (DESQ…NNRK), and 319–445 (VLQK…IWTQ). Positions 19 to 47 (DNYNNNNSNINTNNNNSINDYENQNNGLV) are enriched in low complexity. The segment covering 60–74 (DQNDSFDDDSMDEGE) has biased composition (acidic residues). Composition is skewed to low complexity over residues 90 to 212 (NNNN…ENNN) and 225 to 264 (NNNN…NNNN). The segment covering 324-348 (TLNRNRSRSRSRSNSRSHSRSRSRS) has biased composition (basic residues). 2 stretches are compositionally biased toward low complexity: residues 349-368 (RSLS…YSRS) and 376-420 (NNNN…NNNN). Positions 423–434 (RKSEDDNQDDGK) are enriched in basic and acidic residues. Residues 435–489 (KKHRKNAIWTQEEDEKMAQLYNKYGKSWKAIHSHFDDKTREQVQSHGQYLIRIGK) enclose the HTH myb-type domain. The H-T-H motif DNA-binding region spans 462 to 485 (WKAIHSHFDDKTREQVQSHGQYLI). The interval 494–595 (HRDGRKERRK…NSSNYVNNDN (102 aa)) is disordered. Residues 517–595 (QQNQQNNNNN…NSSNYVNNDN (79 aa)) are compositionally biased toward low complexity.

The protein localises to the nucleus. The protein is Myb-like protein D (mybD) of Dictyostelium discoideum (Social amoeba).